The primary structure comprises 148 residues: Large ribosomal subunit protein uL15 (148 aa).

Residues 1–12 (MSDPIKLHDLRP) show a composition bias toward basic and acidic residues. Residues 1-45 (MSDPIKLHDLRPAKGANKAKTRVGRGEASKGKTAGRGTKGTKARN) form a disordered region.

Belongs to the universal ribosomal protein uL15 family. In terms of assembly, part of the 50S ribosomal subunit.

Functionally, binds to the 23S rRNA. This Corynebacterium urealyticum (strain ATCC 43042 / DSM 7109) protein is Large ribosomal subunit protein uL15.